The primary structure comprises 566 residues: CTP synthase (566 aa).

The interval 1-270 (MTKFVFVTGG…DGLICDKLRL (270 aa)) is amidoligase domain. Position 13 (S13) interacts with CTP. Position 13 (S13) interacts with UTP. ATP contacts are provided by residues 14-19 (SLGKGI) and D71. Positions 71 and 144 each coordinate Mg(2+). CTP contacts are provided by residues 151 to 153 (DIE), 191 to 196 (KTKPTQ), and K227. Residues 191-196 (KTKPTQ) and K227 contribute to the UTP site. In terms of domain architecture, Glutamine amidotransferase type-1 spans 295 to 547 (SIAMVGKYVD…IAATLEQRSA (253 aa)). Residue G356 coordinates L-glutamine. C383 functions as the Nucleophile; for glutamine hydrolysis in the catalytic mechanism. Residues 384 to 387 (LGMQ), E407, and R473 contribute to the L-glutamine site. Active-site residues include H520 and E522.

This sequence belongs to the CTP synthase family. In terms of assembly, homotetramer.

The enzyme catalyses UTP + L-glutamine + ATP + H2O = CTP + L-glutamate + ADP + phosphate + 2 H(+). It catalyses the reaction L-glutamine + H2O = L-glutamate + NH4(+). The catalysed reaction is UTP + NH4(+) + ATP = CTP + ADP + phosphate + 2 H(+). It functions in the pathway pyrimidine metabolism; CTP biosynthesis via de novo pathway; CTP from UDP: step 2/2. With respect to regulation, allosterically activated by GTP, when glutamine is the substrate; GTP has no effect on the reaction when ammonia is the substrate. The allosteric effector GTP functions by stabilizing the protein conformation that binds the tetrahedral intermediate(s) formed during glutamine hydrolysis. Inhibited by the product CTP, via allosteric rather than competitive inhibition. Functionally, catalyzes the ATP-dependent amination of UTP to CTP with either L-glutamine or ammonia as the source of nitrogen. Regulates intracellular CTP levels through interactions with the four ribonucleotide triphosphates. The sequence is that of CTP synthase from Polaromonas naphthalenivorans (strain CJ2).